A 195-amino-acid polypeptide reads, in one-letter code: Morphogenetic protein (195 aa).

Its function is as follows. Assembly factor active in membrane morphogenesis. The protein is Morphogenetic protein (P12) of Pseudomonas phage phi6 (Bacteriophage phi-6).